The sequence spans 139 residues: Small ribosomal subunit protein uS11 (139 aa).

The segment covering 1-13 (MAKQAAKGSAAAT) has biased composition (low complexity). Residues 1–30 (MAKQAAKGSAAATKRQRGKRREKKNVPRGQ) form a disordered region. The segment covering 14 to 23 (KRQRGKRREK) has biased composition (basic residues).

The protein belongs to the universal ribosomal protein uS11 family. As to quaternary structure, part of the 30S ribosomal subunit. Interacts with proteins S7 and S18. Binds to IF-3.

In terms of biological role, located on the platform of the 30S subunit, it bridges several disparate RNA helices of the 16S rRNA. Forms part of the Shine-Dalgarno cleft in the 70S ribosome. The sequence is that of Small ribosomal subunit protein uS11 from Roseiflexus sp. (strain RS-1).